The primary structure comprises 314 residues: Transmembrane protein 248 (314 aa).

A helical transmembrane segment spans residues 21-41 (VVFMISVSAMAIAFLTLGYFF). The interval 78-106 (LSNDTTTPESTMTVGQARSSTQPPQSLEE) is disordered. Residues 80–105 (NDTTTPESTMTVGQARSSTQPPQSLE) are compositionally biased toward polar residues. The next 3 membrane-spanning stretches (helical) occupy residues 179-199 (QAVF…PVTV), 236-258 (FWCY…TVVV), and 270-290 (LMHT…YAVI).

This sequence belongs to the TMEM248 family.

Its subcellular location is the membrane. This Mus musculus (Mouse) protein is Transmembrane protein 248 (Tmem248).